Consider the following 71-residue polypeptide: Large ribosomal subunit protein bL31 (71 aa).

Residues Cys16, Cys18, Cys37, and Cys40 each coordinate Zn(2+).

The protein belongs to the bacterial ribosomal protein bL31 family. Type A subfamily. Part of the 50S ribosomal subunit. Requires Zn(2+) as cofactor.

Binds the 23S rRNA. This is Large ribosomal subunit protein bL31 from Pseudoalteromonas atlantica (strain T6c / ATCC BAA-1087).